Reading from the N-terminus, the 468-residue chain is Anthocyanidin 3-O-glucoside 2'''-O-xylosyltransferase (468 aa).

UDP-alpha-D-xylose contacts are provided by residues S284, 344 to 346, 361 to 369, and 383 to 386; these read IQQ, HCGFGSMWE, and HGEQ.

This sequence belongs to the UDP-glycosyltransferase family.

The enzyme catalyses an anthocyanidin 3-O-beta-D-glucoside + UDP-alpha-D-xylose = an anthocyanidin 3-O-beta-D-sambubioside + UDP + 2 H(+). The protein operates within secondary metabolite biosynthesis; flavonoid biosynthesis. Contributes to the last few anthocyanin biosynthetic steps. Converts cyanidin 3-O-glucoside to cyanidin 3-O-xylosyl(1-&gt;2)glucoside. Can use 3-O-glucosylated anthocyanidins/flavonols and uridine diphosphate (UDP)-xylose as substrates. This is Anthocyanidin 3-O-glucoside 2'''-O-xylosyltransferase (A3G2XYLT) from Arabidopsis thaliana (Mouse-ear cress).